Reading from the N-terminus, the 571-residue chain is Proline--tRNA ligase (571 aa).

The protein belongs to the class-II aminoacyl-tRNA synthetase family. ProS type 1 subfamily. In terms of assembly, homodimer.

Its subcellular location is the cytoplasm. It carries out the reaction tRNA(Pro) + L-proline + ATP = L-prolyl-tRNA(Pro) + AMP + diphosphate. Catalyzes the attachment of proline to tRNA(Pro) in a two-step reaction: proline is first activated by ATP to form Pro-AMP and then transferred to the acceptor end of tRNA(Pro). As ProRS can inadvertently accommodate and process non-cognate amino acids such as alanine and cysteine, to avoid such errors it has two additional distinct editing activities against alanine. One activity is designated as 'pretransfer' editing and involves the tRNA(Pro)-independent hydrolysis of activated Ala-AMP. The other activity is designated 'posttransfer' editing and involves deacylation of mischarged Ala-tRNA(Pro). The misacylated Cys-tRNA(Pro) is not edited by ProRS. The protein is Proline--tRNA ligase of Pseudomonas aeruginosa (strain UCBPP-PA14).